An 895-amino-acid polypeptide reads, in one-letter code: Putative endoplasmic reticulum metallopeptidase 1-B (895 aa).

Residues 1-27 are disordered; it reads MSTGIRRRHADEKKNILEKESLQNDET. Residues 1–39 are Cytoplasmic-facing; it reads MSTGIRRRHADEKKNILEKESLQNDETQREMEKDISLLR. The span at 9 to 27 shows a compositional bias: basic and acidic residues; the sequence is HADEKKNILEKESLQNDET. The helical transmembrane segment at 40–60 threads the bilayer; sequence PAHWNFIGLFFLVLIIGTTFL. Over 61 to 374 the chain is Lumenal; that stretch reads HKCLPEPKDP…KPAEYADRKT (314 aa). N-linked (GlcNAc...) asparagine glycosylation is present at Asn-156. Zn(2+) contacts are provided by His-180 and Asp-192. Glu-226 acts as the Proton acceptor in catalysis. The Zn(2+) site is built by Glu-227, Glu-253, and His-329. Residues 375-395 traverse the membrane as a helical segment; it reads VFFDFLGLFVIIYPLSIAHLV. Over 396-424 the chain is Cytoplasmic; sequence NMLTICTVIALMSHRFYSKTFITFLALRD. A helical transmembrane segment spans residues 425–445; the sequence is YVLTILTIALVLKAMTFMSLF. The Lumenal portion of the chain corresponds to 446–457; sequence TYGALRWYTRHW. A helical transmembrane segment spans residues 458–478; it reads LALVAYGLPSVWAGISVQGLL. Topologically, residues 479-489 are cytoplasmic; that stretch reads TARLAPKAREE. The chain crosses the membrane as a helical span at residues 490-512; sequence YGSTLELIHLTLISGILLAFTYY. The Lumenal segment spans residues 513 to 515; it reads DIA. Residues 516–538 form a helical membrane-spanning segment; it reads SGFLFALLLVPAIKSIITYFGAW. At 539-553 the chain is on the cytoplasmic side; it reads PTCPTFNTILTLILS. Residues 554–574 traverse the membrane as a helical segment; that stretch reads FPGCAMAIYTTEMLLSIFIPI. Residues 575–584 lie on the Lumenal side of the membrane; the sequence is MGRSSYNPEP. The helical transmembrane segment at 585–605 threads the bilayer; sequence AVSFFVAFSAGCIVLSLGGLV. Topologically, residues 606-619 are cytoplasmic; that stretch reads AKSRNSRSSNEAGL. The chain crosses the membrane as a helical span at residues 620–640; it reads LELIYNILGVLLVTLTILYVF. Residues 641–895 lie on the Lumenal side of the membrane; the sequence is SSFWPSPYRF…WNVDQVYKYF (255 aa). 2 N-linked (GlcNAc...) asparagine glycosylation sites follow: Asn-679 and Asn-796.

The protein belongs to the peptidase M28 family. It depends on Zn(2+) as a cofactor.

The protein resides in the endoplasmic reticulum membrane. The sequence is that of Putative endoplasmic reticulum metallopeptidase 1-B from Caenorhabditis elegans.